The following is a 282-amino-acid chain: sn-glycerol-3-phosphate transport system permease protein UgpE (282 aa).

Helical transmembrane passes span 14 to 34 (LILI…FVAS), 86 to 106 (MAIA…IVFF), 112 to 132 (MFFF…RILP), 146 to 168 (YAGL…QFFL), 201 to 221 (IAAL…WPLL), and 248 to 268 (WNYV…VVVL). In terms of domain architecture, ABC transmembrane type-1 spans 78–269 (LWNSFVVAMA…IPLILVVVLM (192 aa)).

Belongs to the binding-protein-dependent transport system permease family. In terms of assembly, the complex is composed of two ATP-binding proteins (UgpC), two transmembrane proteins (UgpA and UgpE) and a solute-binding protein (UgpB).

Its subcellular location is the cell inner membrane. Part of the ABC transporter complex UgpBAEC involved in sn-glycerol-3-phosphate (G3P) import. Probably responsible for the translocation of the substrate across the membrane. This chain is sn-glycerol-3-phosphate transport system permease protein UgpE (ugpE), found in Brucella abortus (strain 2308).